The chain runs to 640 residues: MKNKNSEQNTHYTIGEQDIHYFHEGKHIYAYEFMGAHKACEEGIEGIRFTTWAPNAKSICVIGDFNYWQVEDKNYMEPITDAGLWSVFIPNAKNGDKYKFVVTNKDTSHYVYKSDPYAFFSELRPNTASIITTETQYTWSDDKWLEKRAKTNYYDNPMNVYELHLASWKTKNGKFLTYDELSETLPQYIKEMGYTHVEFMPLHEHPLDASWGYQPTGFYSVNSRHGDIIGLKRLVDKLHNNDIGVILDWVPGHFCKDQHGLIYFDGSPCYEYQEPTKAINKGWETHNFDLGRNEVKCFLISNAMYWINEFHIDGLRVDAVSNILYLNYDREDGQWIPNIYGGHENLEGIAFLKELNGVLKHTCKGVITIAEESSSWPDISTPVEKGGLGFDFKWNMGWMNDTLRYISLDPVYRKYHHNLITFSMVYHYSEKFILSISHDEVVHGKKSLINKMWGDLWNKYAGLRLYMSYMIGHPGKKLIFMGSEFVQFVEWREYEQLQWQVVDQYESHKQTLHFFKKLNDFYHNETALWQCDYDHHGFRWIDANNSQQSILSFIRSSKDNKQKLIFICNFTPVTYYDYHLGVPDAGSYKEVFNSDNLEFGGSGQVMATEIFSSPQSSHGFEQRIIIKIPPMATLVLKLIK.

Asp-318 (nucleophile) is an active-site residue. Glu-371 (proton donor) is an active-site residue.

It belongs to the glycosyl hydrolase 13 family. GlgB subfamily. As to quaternary structure, monomer.

It catalyses the reaction Transfers a segment of a (1-&gt;4)-alpha-D-glucan chain to a primary hydroxy group in a similar glucan chain.. It functions in the pathway glycan biosynthesis; glycogen biosynthesis. In terms of biological role, catalyzes the formation of the alpha-1,6-glucosidic linkages in glycogen by scission of a 1,4-alpha-linked oligosaccharide from growing alpha-1,4-glucan chains and the subsequent attachment of the oligosaccharide to the alpha-1,6 position. In Francisella tularensis subsp. holarctica (strain LVS), this protein is 1,4-alpha-glucan branching enzyme GlgB.